The following is a 264-amino-acid chain: Thymidylate synthase (264 aa).

R21 is a binding site for dUMP. (6R)-5,10-methylene-5,6,7,8-tetrahydrofolate is bound at residue H51. 126-127 serves as a coordination point for dUMP; it reads RR. The active-site Nucleophile is the C146. Residues 166–169, N177, and 207–209 contribute to the dUMP site; these read RSCD and HLY. D169 is a binding site for (6R)-5,10-methylene-5,6,7,8-tetrahydrofolate. Residue A263 coordinates (6R)-5,10-methylene-5,6,7,8-tetrahydrofolate.

The protein belongs to the thymidylate synthase family. Bacterial-type ThyA subfamily. Homodimer.

The protein resides in the cytoplasm. It catalyses the reaction dUMP + (6R)-5,10-methylene-5,6,7,8-tetrahydrofolate = 7,8-dihydrofolate + dTMP. It functions in the pathway pyrimidine metabolism; dTTP biosynthesis. Catalyzes the reductive methylation of 2'-deoxyuridine-5'-monophosphate (dUMP) to 2'-deoxythymidine-5'-monophosphate (dTMP) while utilizing 5,10-methylenetetrahydrofolate (mTHF) as the methyl donor and reductant in the reaction, yielding dihydrofolate (DHF) as a by-product. This enzymatic reaction provides an intracellular de novo source of dTMP, an essential precursor for DNA biosynthesis. The sequence is that of Thymidylate synthase from Cronobacter sakazakii (strain ATCC BAA-894) (Enterobacter sakazakii).